A 702-amino-acid polypeptide reads, in one-letter code: Polyribonucleotide nucleotidyltransferase 2 (702 aa).

The Mg(2+) site is built by Asp-483 and Asp-489. A KH domain is found at 550 to 609; it reads PQVTKLKVHPDKVREVIGAGGKVINKIIDETGVKINIENDGTIYIAAPDQESARVALEMI. Positions 619–687 constitute an S1 motif domain; the sequence is GEVYTGKVIK…PQGKIGLSRK (69 aa).

Belongs to the polyribonucleotide nucleotidyltransferase family. It depends on Mg(2+) as a cofactor.

Its subcellular location is the cytoplasm. The catalysed reaction is RNA(n+1) + phosphate = RNA(n) + a ribonucleoside 5'-diphosphate. In terms of biological role, involved in mRNA degradation. Catalyzes the phosphorolysis of single-stranded polyribonucleotides processively in the 3'- to 5'-direction. In Alkaliphilus metalliredigens (strain QYMF), this protein is Polyribonucleotide nucleotidyltransferase 2.